The primary structure comprises 556 residues: Membrane protein insertase YidC (556 aa).

A helical membrane pass occupies residues threonine 5 to tryptophan 25. The segment at glutamine 36–methionine 74 is disordered. Residues serine 42–alanine 55 are compositionally biased toward low complexity. 4 consecutive transmembrane segments (helical) span residues asparagine 370–alanine 390, leucine 441–valine 461, phenylalanine 468–methionine 488, and isoleucine 510–valine 530.

It belongs to the OXA1/ALB3/YidC family. Type 1 subfamily. Interacts with the Sec translocase complex via SecD. Specifically interacts with transmembrane segments of nascent integral membrane proteins during membrane integration.

It is found in the cell inner membrane. Functionally, required for the insertion and/or proper folding and/or complex formation of integral membrane proteins into the membrane. Involved in integration of membrane proteins that insert both dependently and independently of the Sec translocase complex, as well as at least some lipoproteins. Aids folding of multispanning membrane proteins. The polypeptide is Membrane protein insertase YidC (Magnetococcus marinus (strain ATCC BAA-1437 / JCM 17883 / MC-1)).